Consider the following 162-residue polypeptide: MQHLVLIGFMGSGKSSLAQELGLALKLEVLDTDMIISERVGLSVRGIFEELGEDNFRMFEKNLIDELKTLKTPHIISTGGGIVMHENLKGLGTTFYLKMDFETLIKRLNQKEREKRPLLNNLTQAKELFEKRQALYEKNASFIIDARGGLNNSLKQVLQFIA.

11–16 (GSGKSS) is an ATP binding site. Mg(2+) is bound at residue Ser15. Substrate-binding residues include Asp33, Arg57, and Gly80. Residue Arg116 coordinates ATP. Arg132 provides a ligand contact to substrate.

The protein belongs to the shikimate kinase family. In terms of assembly, monomer. It depends on Mg(2+) as a cofactor.

It is found in the cytoplasm. It carries out the reaction shikimate + ATP = 3-phosphoshikimate + ADP + H(+). The protein operates within metabolic intermediate biosynthesis; chorismate biosynthesis; chorismate from D-erythrose 4-phosphate and phosphoenolpyruvate: step 5/7. Functionally, catalyzes the specific phosphorylation of the 3-hydroxyl group of shikimic acid using ATP as a cosubstrate. The polypeptide is Shikimate kinase (Helicobacter pylori (strain J99 / ATCC 700824) (Campylobacter pylori J99)).